Consider the following 215-residue polypeptide: 3-isopropylmalate dehydratase small subunit (215 aa).

Belongs to the LeuD family. LeuD type 1 subfamily. In terms of assembly, heterodimer of LeuC and LeuD.

The enzyme catalyses (2R,3S)-3-isopropylmalate = (2S)-2-isopropylmalate. It participates in amino-acid biosynthesis; L-leucine biosynthesis; L-leucine from 3-methyl-2-oxobutanoate: step 2/4. Catalyzes the isomerization between 2-isopropylmalate and 3-isopropylmalate, via the formation of 2-isopropylmaleate. The protein is 3-isopropylmalate dehydratase small subunit of Teredinibacter turnerae (strain ATCC 39867 / T7901).